The following is a 376-amino-acid chain: Mitogen-activated protein kinase 5 (376 aa).

In terms of domain architecture, Protein kinase spans 43–329 (VPPIRPIGRG…VEEALCYPYL (287 aa)). ATP-binding positions include 49–57 (IGRGAYGFV) and Lys72. Residue Asp169 is the Proton acceptor of the active site. Phosphothreonine is present on Thr201. Positions 201–203 (TEY) match the TXY motif. At Tyr203 the chain carries Phosphotyrosine. Phosphothreonine is present on Thr206.

Belongs to the protein kinase superfamily. CMGC Ser/Thr protein kinase family. MAP kinase subfamily. Autophosphorylated on threonine and tyrosine residues. In terms of processing, dually phosphorylated on Thr-201 and Tyr-203, which activates the enzyme.

It catalyses the reaction L-seryl-[protein] + ATP = O-phospho-L-seryl-[protein] + ADP + H(+). The catalysed reaction is L-threonyl-[protein] + ATP = O-phospho-L-threonyl-[protein] + ADP + H(+). With respect to regulation, activated by threonine and tyrosine phosphorylation. Activated by the MAP kinase kinase MKK2. Activated by the MAP kinase kinase MKK6 in vitro. The polypeptide is Mitogen-activated protein kinase 5 (MPK5) (Arabidopsis thaliana (Mouse-ear cress)).